Consider the following 148-residue polypeptide: Large ribosomal subunit protein bL9 (148 aa).

Belongs to the bacterial ribosomal protein bL9 family.

Binds to the 23S rRNA. The protein is Large ribosomal subunit protein bL9 of Stutzerimonas stutzeri (strain A1501) (Pseudomonas stutzeri).